The following is a 258-amino-acid chain: Ribosomal RNA large subunit methyltransferase E (258 aa).

S-adenosyl-L-methionine contacts are provided by G58, W60, D78, D96, and D120. The Proton acceptor role is filled by K160.

Belongs to the class I-like SAM-binding methyltransferase superfamily. RNA methyltransferase RlmE family.

It localises to the cytoplasm. It carries out the reaction uridine(2552) in 23S rRNA + S-adenosyl-L-methionine = 2'-O-methyluridine(2552) in 23S rRNA + S-adenosyl-L-homocysteine + H(+). Its function is as follows. Specifically methylates the uridine in position 2552 of 23S rRNA at the 2'-O position of the ribose in the fully assembled 50S ribosomal subunit. The protein is Ribosomal RNA large subunit methyltransferase E of Methanococcus maripaludis (strain C7 / ATCC BAA-1331).